Reading from the N-terminus, the 104-residue chain is MKATIKTQGQQFTVSEGDILTVNRYPNTEAGATVEISEVLATGEGENFRVGTPTLAGAIVSAKILENKRGEKVIVFKKRKRKGMERKRGHRQELSVIKIESIKV.

Belongs to the bacterial ribosomal protein bL21 family. Part of the 50S ribosomal subunit. Contacts protein L20.

This protein binds to 23S rRNA in the presence of protein L20. This is Large ribosomal subunit protein bL21 from Opitutus terrae (strain DSM 11246 / JCM 15787 / PB90-1).